Reading from the N-terminus, the 415-residue chain is Tumor necrosis factor receptor superfamily member 3 (415 aa).

Residues 1-30 form the signal peptide; the sequence is MRLPRASSPCGLAWGPLLLGLSGLLVASQP. The Extracellular segment spans residues 31–223; sequence QLVPPYRIEN…NPPEPGAMLL (193 aa). N-linked (GlcNAc...) asparagine glycosylation is present at N40. TNFR-Cys repeat units follow at residues 42 to 81, 82 to 124, 125 to 170, and 171 to 213; these read TCWDQDKEYYEPMHDVCCSRCPPGEFVFAVCSRSQDTVCK, TCPH…KAEC, RCQP…VNCV, and PCKP…TICK. Intrachain disulfides connect C43/C58, C59/C72, C62/C80, C83/C98, C101/C116, C104/C124, C126/C132, C139/C150, C142/C169, and C172/C187. N179 carries N-linked (GlcNAc...) asparagine glycosylation. A helical transmembrane segment spans residues 224–244; that stretch reads LAILLSLVLFLLFTTVLACAW. At 245 to 415 the chain is on the cytoplasmic side; sequence MRHPSLCRKL…ETETLGCQDL (171 aa). The segment at 261–304 is disordered; that stretch reads HPEGEESPPCPAPRADPHFPDLAEPLLPMSGDLSPSPAGPPTAP. The residue at position 315 (S315) is a Phosphoserine. The tract at residues 361-399 is disordered; sequence LGGTRGPGDPPAPPEPPYPTPEEGAPGPSELSTPYQEDG. Over residues 368–380 the composition is skewed to pro residues; it reads GDPPAPPEPPYPT.

In terms of assembly, self-associates; dimerization and trimerization are promoted by lymphotoxin (LTA(3)). Associates with TRAF3. Associates with TRAF4. Associates with TRAF5.

The protein localises to the membrane. Receptor for the heterotrimeric lymphotoxin containing LTA and LTB, and for TNFS14/LIGHT. Activates NF-kappa-B signaling upon stimulation with lymphotoxin. Promotes apoptosis via TRAF3 and TRAF5. May play a role in the development of lymphoid organs. Functionally, (Microbial infection) Plays a role in host defense against Zika virus infection. The chain is Tumor necrosis factor receptor superfamily member 3 (Ltbr) from Mus musculus (Mouse).